The primary structure comprises 48 residues: uncharacterized protein (48 aa).

It is found in the plastid. It localises to the cyanelle. This is an uncharacterized protein from Cyanophora paradoxa.